Here is a 2138-residue protein sequence, read N- to C-terminus: Conidial yellow pigment biosynthesis polyketide synthase melA (2138 aa).

Residues 8–244 (YLFGDQTADF…TRVPIHGPYH (237 aa)) form an N-terminal acylcarrier protein transacylase domain (SAT) region. The Ketosynthase family 3 (KS3) domain maps to 373–804 (QSKIAIIGLS…GGNTALMVED (432 aa)). Residues Cys-545, His-680, and His-722 each act as for beta-ketoacyl synthase activity in the active site. The malonyl-CoA:ACP transacylase (MAT) domain stretch occupies residues 910 to 1229 (FVFTGQGAQY…VSALYMAGIE (320 aa)). Ser-999 functions as the For acyl/malonyl transferase activity in the catalytic mechanism. A product template (PT) domain region spans residues 1288-1601 (SSAAQRVLET…RKILDMALPP (314 aa)). Positions 1292–1423 (QRVLETSGDN…CNIKFFDPSP (132 aa)) are N-terminal hotdog fold. The region spanning 1292-1596 (QRVLETSGDN…FQGLARKILD (305 aa)) is the PKS/mFAS DH domain. His-1324 serves as the catalytic Proton acceptor; for dehydratase activity. Residues 1451-1596 (AHRMKRGMVY…FQGLARKILD (146 aa)) form a C-terminal hotdog fold region. Asp-1509 functions as the Proton donor; for dehydratase activity in the catalytic mechanism. A Carrier 1 domain is found at 1640 to 1714 (PSMATRALAI…DFKHLLAQMG (75 aa)). At Ser-1674 the chain carries O-(pantetheine 4'-phosphoryl)serine. A disordered region spans residues 1712 to 1758 (QMGPGESSDGSSSEGDMSSAASSTDLSSPNTSGLPTPANEKSMTHGL). A compositionally biased stretch (low complexity) spans 1713–1739 (MGPGESSDGSSSEGDMSSAASSTDLSS). The segment covering 1740–1758 (PNTSGLPTPANEKSMTHGL) has biased composition (polar residues). Residues 1759–1836 (QGQNDSMRQI…DIETTLDLKP (78 aa)) enclose the Carrier 2 domain. Position 1796 is an O-(pantetheine 4'-phosphoryl)serine (Ser-1796). Residues 1863–2135 (TQHPPATSIL…ELARFIANSM (273 aa)) form a claisen cyclase domain region. Ser-1953 functions as the For Claisen cyclase activity in the catalytic mechanism.

It carries out the reaction 6 malonyl-CoA + acetyl-CoA + 6 H(+) = naphtopyrone YWA1 + 6 CO2 + 7 CoA + H2O. It functions in the pathway pigment biosynthesis. Its pathway is polyketide biosynthesis; heptaketide naphthopyrone YWA1 biosynthesis. Non-reducing polyketide synthase involved in the biosynthesis of a yellow conidial pigment. Probably forms the heptaketide naphthopyrene YWA1 via condensation of acetate units. The polypeptide is Conidial yellow pigment biosynthesis polyketide synthase melA (Penicillium expansum (Blue mold rot fungus)).